The sequence spans 557 residues: DNA 3'-5' helicase XPB (557 aa).

The required for protein stability or solubility stretch occupies residues 1 to 135 (MTDGPLIVQS…APLLGTRIAP (135 aa)). Residues 190–344 (VDNFWNGGSG…DVFSLIGPKR (155 aa)) form the Helicase ATP-binding domain. 203-210 (LPCGAGKT) lines the ATP pocket. The DEAH box signature appears at 298 to 301 (DEVH). The region spanning 398-544 (RVVEKLVAQH…AYRIVDADDI (147 aa)) is the Helicase C-terminal domain.

The protein belongs to the helicase family. RAD25/XPB subfamily. As to quaternary structure, monomer. The cofactor is Mn(2+). Mg(2+) serves as cofactor. It depends on Ca(2+) as a cofactor.

The enzyme catalyses Couples ATP hydrolysis with the unwinding of duplex DNA by translocating in the 3'-5' direction.. It carries out the reaction ATP + H2O = ADP + phosphate + H(+). In terms of biological role, ATP-dependent 3'-5' DNA helicase, unwinds 3'-overhangs, 3'- flaps, and splayed-arm DNA substrates but not 5'-overhangs or 5'-flap substrates. Requires ATP hydrolysis for activity; the ATPase activity is DNA-dependent and requires a minimum of 4 single-stranded nucleotides (nt) with 6-10 nt providing all necessary interactions for full processive unwinding. The ATPase prefers ATP over CTP or GTP, is almost inactive with TTP. This Kineococcus radiotolerans (strain ATCC BAA-149 / DSM 14245 / SRS30216) protein is DNA 3'-5' helicase XPB.